A 654-amino-acid polypeptide reads, in one-letter code: Spindle assembly abnormal protein 6 homolog (654 aa).

One can recognise a PISA domain in the interval 39–91 (VHRKDLVIRLTDDTDPFFLYNLVISEEDFQSLKLQQGLLVDFLAFPQKFIDLL). Residues 175 to 471 (TRQLHITQET…QLLKNNEKLI (297 aa)) adopt a coiled-coil conformation. Ser509 is subject to Phosphoserine. Residues 568–589 (ASIDGQPGAAVNRPCSNDKENG) form a disordered region. Residue Ser612 is modified to Phosphoserine. Residues 634–644 (SKPTVLPSSSS) are compositionally biased toward low complexity. The tract at residues 634 to 654 (SKPTVLPSSSSAYFPGQLPSS) is disordered. Ser654 is modified (phosphoserine).

In terms of assembly, nine homodimers form a cartwheel structure with an internal diameter of 23 nm and radial spokes connecting to the microtubule triplets. Forms a complex with CPAP and STIL. Interacts with FBXW5. Interacts with NUP62 and TUBG1 at the centrosome. Interacts with CENATAC; the interaction increases with CENATAC acetylation. Interacts with FZR1; the interaction is regulated by CENATAC and leads to SASS6 proteasomal degradation. Ubiquitinated by the SCF(FBXW5) E3 ubiquitin-protein ligase complex during S phase, leading to its degradation and preventing centriole reduplication. Ubiquitinated by the anaphase promoting complex/cyclosome (APC/C) E3 ubiquitin-protein ligase complex, leading to its degradation and preventing centriole reduplication.

It is found in the cytoplasm. The protein localises to the cytoskeleton. The protein resides in the microtubule organizing center. Its subcellular location is the centrosome. It localises to the centriole. Central scaffolding component of the centrioles ensuring their 9-fold symmetry. Required for centrosome biogenesis and duplication. Required both for mother-centriole-dependent centriole duplication and deuterosome-dependent centriole amplification in multiciliated cells. Not required for centriole formation in embryonic stem cells but necessary to maintain centriole architecture. Required for the recruitment of STIL to the procentriole and for STIL-mediated centriole amplification. This Mus musculus (Mouse) protein is Spindle assembly abnormal protein 6 homolog.